We begin with the raw amino-acid sequence, 147 residues long: MASKRIQKELKDLQKDPPTSCSAGPVGEDMFHWQATIMGPSDSPYAGGVFLVTIHFPPDYPFKPPKVAFRTKVFHPNINSNGSICLDILKDQWSPALTISKVLLSICSLLTDPNPDDPLVPEIAHMYKTDRHKYENTARTWTQRYAM.

Residues 1 to 15 (MASKRIQKELKDLQK) show a composition bias toward basic and acidic residues. The interval 1 to 24 (MASKRIQKELKDLQKDPPTSCSAG) is disordered. The region spanning 1-147 (MASKRIQKEL…ARTWTQRYAM (147 aa)) is the UBC core domain. C85 (glycyl thioester intermediate) is an active-site residue.

This sequence belongs to the ubiquitin-conjugating enzyme family.

It catalyses the reaction S-ubiquitinyl-[E1 ubiquitin-activating enzyme]-L-cysteine + [E2 ubiquitin-conjugating enzyme]-L-cysteine = [E1 ubiquitin-activating enzyme]-L-cysteine + S-ubiquitinyl-[E2 ubiquitin-conjugating enzyme]-L-cysteine.. The protein operates within protein modification; protein ubiquitination. In terms of biological role, E2 conjugating enzyme that associates with the E3 ubiquitin-protein ligase EL5 to mediate ubiquitination of target proteins. This chain is Ubiquitin-conjugating enzyme E2 5A (UBC5A), found in Oryza sativa subsp. japonica (Rice).